We begin with the raw amino-acid sequence, 93 residues long: Putative pterin-4-alpha-carbinolamine dehydratase (93 aa).

This sequence belongs to the pterin-4-alpha-carbinolamine dehydratase family.

The enzyme catalyses (4aS,6R)-4a-hydroxy-L-erythro-5,6,7,8-tetrahydrobiopterin = (6R)-L-erythro-6,7-dihydrobiopterin + H2O. The sequence is that of Putative pterin-4-alpha-carbinolamine dehydratase from Trichormus variabilis (strain ATCC 29413 / PCC 7937) (Anabaena variabilis).